Reading from the N-terminus, the 491-residue chain is MDTSVLLLLAVLLSFLLFLVRGHAKVHGHLPPGPRPLPLLGNLLQMDRGGFRKSFIQLQEKHGDVFTVYFGPRPVVMLCGTQTIREALVDHAEAFSGRGIIAVLQPIMQEYGVSFVNEERWKILRRLFVATMRDFGIGKQSVEDQIKEEAKCLVEELKNHQGVSLDPTFLFQCVTGNIICSIVFGERFDYRDRQFLRLLDLLYRTFSLISSFSSQMFEVYSDFLKYFPGVHREIYKNLKEVLDYIDHSVENHRATLDPNAPRDFIDTFLLHMEKEKLNHYTEFHHWNLMISVLFLFLAGTESTSNTLCYGFLLMLKYPHVAEKVQKEIDQVIGSQRVPTLDDRSKMPYTEAVIHEIQRFSDVSPMGLPCRITKDTLFRGYLLPKNTEVYFILSSALHDPQYFEQPDTFNPEHFLDANGALKKCEAFMPFSIGKRMCLGEGIARSELFLFFTTILQNYSVSSPVDPNTIDMTPKESGLAKVAPVYKICFVAR.

Cysteine 436 is a heme binding site.

The protein belongs to the cytochrome P450 family. Heme is required as a cofactor. In terms of tissue distribution, liver. Not found in the lung, kidney and prostate.

Its subcellular location is the endoplasmic reticulum membrane. The protein resides in the microsome membrane. The catalysed reaction is an organic molecule + reduced [NADPH--hemoprotein reductase] + O2 = an alcohol + oxidized [NADPH--hemoprotein reductase] + H2O + H(+). Functionally, cytochromes P450 are a group of heme-thiolate monooxygenases. In liver microsomes, this enzyme is involved in an NADPH-dependent electron transport pathway. It oxidizes a variety of structurally unrelated compounds, including steroids, fatty acids, and xenobiotics. The polypeptide is Cytochrome P450 2B3 (Cyp2b3) (Rattus norvegicus (Rat)).